A 279-amino-acid polypeptide reads, in one-letter code: MAFQGTSRTLTQQSSAATSDDLQKILFSPEAIKKMATECDLGRHHWMRADSAISVRPLVPEVTHGRIASFFKSGYDVGELCSKGYMSVPQVLCAVTRTVSTDAEGSLRIYLADLGDKELSPIDGQCVSLHNHDLPALVSFQPTYDCPMETVGNRKRCFAVVIERHGYIGYTGTTASVCSNWQARFSSKNNNYTHIAAGKTLVLPFNRLAEQTKPSAVARLLKSQLNNIESSQYLLTNAKINQNARSESEELNVESPPAAIGSSSASRSEAFRPQVVNGL.

Residues 246–279 (SESEELNVESPPAAIGSSSASRSEAFRPQVVNGL) form a disordered region. Positions 254–268 (ESPPAAIGSSSASRS) are enriched in low complexity.

This sequence belongs to the cucumovirus movement protein family.

The protein resides in the host cell junction. Its subcellular location is the host plasmodesma. Its function is as follows. Transports viral genome to neighboring plant cells directly through plasmosdesmata, without any budding. The movement protein allows efficient cell to cell propagation, by bypassing the host cell wall barrier. Acts by forming a tubular structure at the host plasmodesmata, enlarging it enough to allow free passage of virion capsids. The chain is Movement protein from Cucumber mosaic virus (strain O) (CMV).